Consider the following 67-residue polypeptide: Large ribosomal subunit protein uL29 (67 aa).

The protein belongs to the universal ribosomal protein uL29 family.

This chain is Large ribosomal subunit protein uL29, found in Halorhodospira halophila (strain DSM 244 / SL1) (Ectothiorhodospira halophila (strain DSM 244 / SL1)).